The chain runs to 181 residues: Oligoribonuclease (181 aa).

Residues 8 to 171 enclose the Exonuclease domain; that stretch reads LIWIDLEMTG…DDIRESVAEL (164 aa). Tyr-129 is a catalytic residue.

It belongs to the oligoribonuclease family.

The protein resides in the cytoplasm. 3'-to-5' exoribonuclease specific for small oligoribonucleotides. In Klebsiella pneumoniae subsp. pneumoniae (strain ATCC 700721 / MGH 78578), this protein is Oligoribonuclease.